A 511-amino-acid polypeptide reads, in one-letter code: ATP synthase subunit beta, mitochondrial (511 aa).

The transit peptide at 1–33 (MVLPRLYTATSRAAFKAAKQSAPLLSTSWKRCM) directs the protein to the mitochondrion. Residue T112 is modified to Phosphothreonine. 190–197 (GGAGVGKT) is a binding site for ATP. T237 carries the phosphothreonine modification. The residue at position 373 (S373) is a Phosphoserine.

This sequence belongs to the ATPase alpha/beta chains family. F-type ATPases have 2 components, CF(1) - the catalytic core - and CF(0) - the membrane proton channel. CF(1) has five subunits: alpha(3), beta(3), gamma(1), delta(1), epsilon(1). CF(0) has three main subunits: a, b and c.

The protein resides in the mitochondrion. It is found in the mitochondrion inner membrane. It catalyses the reaction ATP + H2O + 4 H(+)(in) = ADP + phosphate + 5 H(+)(out). Functionally, mitochondrial membrane ATP synthase (F(1)F(0) ATP synthase or Complex V) produces ATP from ADP in the presence of a proton gradient across the membrane which is generated by electron transport complexes of the respiratory chain. F-type ATPases consist of two structural domains, F(1) - containing the extramembraneous catalytic core, and F(0) - containing the membrane proton channel, linked together by a central stalk and a peripheral stalk. During catalysis, ATP synthesis in the catalytic domain of F(1) is coupled via a rotary mechanism of the central stalk subunits to proton translocation. Subunits alpha and beta form the catalytic core in F(1). Rotation of the central stalk against the surrounding alpha(3)beta(3) subunits leads to hydrolysis of ATP in three separate catalytic sites on the beta subunits. This Saccharomyces cerevisiae (strain ATCC 204508 / S288c) (Baker's yeast) protein is ATP synthase subunit beta, mitochondrial (ATP2).